We begin with the raw amino-acid sequence, 522 residues long: Nitrogen fixation protein VnfA (522 aa).

The a domain stretch occupies residues 22–183; sequence LLYEMSQIAT…AQAVELYLVE (162 aa). One can recognise a GAF domain in the interval 35–177; it reads DLSSIISILL…ILATTTAQAV (143 aa). Positions 210–439 constitute a Sigma-54 factor interaction domain; sequence IIGNSKPMLE…LENVIERAML (230 aa). ATP contacts are provided by residues 238-245 and 301-310; these read GESGVGKE and AAGGTIFLDE. Residues 493–512 constitute a DNA-binding region (H-T-H motif); the sequence is MTEAATHLGLTARVLGLRMG.

Functionally, required for the expression of the V-dependent nitrogen fixation system in Azotobacter vinelandii. It is required for the regulation of nitrogenase 2 transcription. Interacts with sigma-54. The protein is Nitrogen fixation protein VnfA (vnfA) of Azotobacter vinelandii.